Reading from the N-terminus, the 61-residue chain is Metallothionein-1B (61 aa).

Residues 1 to 29 form a beta region; that stretch reads MDPNCSCPTSGSCSCAGSCTCKACRCPSC. A divalent metal cation contacts are provided by Cys-5, Cys-7, Cys-13, Cys-15, Cys-19, Cys-21, Cys-24, Cys-26, Cys-29, Cys-33, Cys-34, Cys-36, Cys-37, Cys-41, Cys-44, Cys-48, Cys-50, Cys-57, Cys-59, and Cys-60. The segment at 30–61 is alpha; that stretch reads KKSCCSCCPVGCAKCAQGCVCKGASDKCSCCA.

Belongs to the metallothionein superfamily. Type 1 family.

Metallothioneins have a high content of cysteine residues that bind various heavy metals; these proteins are transcriptionally regulated by both heavy metals and glucocorticoids. The polypeptide is Metallothionein-1B (MT1B) (Ovis aries (Sheep)).